The primary structure comprises 559 residues: DDB1- and CUL4-associated factor 10 (559 aa).

The interval 1–119 is disordered; sequence MFPFGPHSPG…HGLGAGLGGP (119 aa). Residues Ser-53, Ser-63, Ser-89, and Ser-92 each carry the phosphoserine modification. A compositionally biased stretch (low complexity) spans 56–86; it reads RPGAPSLSPAPRSGELGLPGAPESSTASAPG. Over residues 87-97 the composition is skewed to pro residues; that stretch reads EPSPPSPPCRR. Residue Arg-134 is modified to Omega-N-methylarginine. WD repeat units lie at residues 166–205, 209–247, 251–290, and 296–335; these read RTHG…HIKT, AHED…TKVC, GHTS…EDGC, and FHTR…KSLE. Ser-349 bears the Phosphoserine mark. Over residues 350–367 the composition is skewed to low complexity; the sequence is SSDLTTSSSSSGPRVSGS. The disordered stretch occupies residues 350–396; it reads SSDLTTSSSSSGPRVSGSPCHHSDSNSSEKHMSRASQREGVSPRNSL. The segment covering 370–381 has biased composition (basic and acidic residues); that stretch reads HHSDSNSSEKHM. 3 WD repeats span residues 408–448, 470–508, and 526–559; these read DHGN…QEGA, VGRG…SELV, and SHND…QPKF.

Belongs to the WD repeat DCAF10 family. In terms of assembly, interacts with DDB1.

The protein operates within protein modification; protein ubiquitination. Functionally, may function as a substrate receptor for CUL4-DDB1 E3 ubiquitin-protein ligase complex. This chain is DDB1- and CUL4-associated factor 10 (DCAF10), found in Homo sapiens (Human).